The following is a 170-amino-acid chain: Photosystem II extrinsic protein V (170 aa).

The first 33 residues, 1–33, serve as a signal peptide directing secretion; sequence MASVFSSLRRSLKGLLVLIPVLIGLAVTSPAQA. Heme c contacts are provided by cysteine 70, cysteine 73, histidine 74, and histidine 125.

This sequence belongs to the cytochrome c family. PsbV subfamily. PSII is composed of 1 copy each of membrane proteins PsbA, PsbB, PsbC, PsbD, PsbE, PsbF, PsbH, PsbI, PsbJ, PsbK, PsbL, PsbM, PsbT, PsbX, PsbY, PsbZ, Psb30/Ycf12, peripheral proteins PsbO, CyanoQ (PsbQ), PsbU, PsbV and a large number of cofactors. It forms dimeric complexes. It depends on heme c as a cofactor.

It is found in the cellular thylakoid membrane. Its function is as follows. One of the extrinsic, lumenal subunits of photosystem II (PSII). PSII is a light-driven water plastoquinone oxidoreductase, using light energy to abstract electrons from H(2)O, generating a proton gradient subsequently used for ATP formation. The extrinsic proteins stabilize the structure of photosystem II oxygen-evolving complex (OEC), the ion environment of oxygen evolution and protect the OEC against heat-induced inactivation. Low-potential cytochrome c that plays a role in the OEC of PSII. This is Photosystem II extrinsic protein V from Synechococcus sp. (strain CC9605).